The chain runs to 307 residues: 4-hydroxy-tetrahydrodipicolinate synthase (307 aa).

Residue Thr49 participates in pyruvate binding. Residue Tyr138 is the Proton donor/acceptor of the active site. Lys166 acts as the Schiff-base intermediate with substrate in catalysis. Ile207 provides a ligand contact to pyruvate.

This sequence belongs to the DapA family. As to quaternary structure, homotetramer; dimer of dimers.

The protein localises to the cytoplasm. It catalyses the reaction L-aspartate 4-semialdehyde + pyruvate = (2S,4S)-4-hydroxy-2,3,4,5-tetrahydrodipicolinate + H2O + H(+). Its pathway is amino-acid biosynthesis; L-lysine biosynthesis via DAP pathway; (S)-tetrahydrodipicolinate from L-aspartate: step 3/4. Catalyzes the condensation of (S)-aspartate-beta-semialdehyde [(S)-ASA] and pyruvate to 4-hydroxy-tetrahydrodipicolinate (HTPA). This is 4-hydroxy-tetrahydrodipicolinate synthase from Limosilactobacillus reuteri (strain DSM 20016) (Lactobacillus reuteri).